The chain runs to 166 residues: Photosystem I assembly protein Ycf3 (166 aa).

3 TPR repeats span residues 31–64, 68–101, and 116–149; these read AFKY…EEDP, SYIL…NPNL, and GEQA…APNN.

This sequence belongs to the Ycf3 family.

It localises to the cellular thylakoid membrane. Its function is as follows. Essential for the assembly of the photosystem I (PSI) complex. May act as a chaperone-like factor to guide the assembly of the PSI subunits. This Acaryochloris marina (strain MBIC 11017) protein is Photosystem I assembly protein Ycf3.